Reading from the N-terminus, the 736-residue chain is 1,4-alpha-glucan branching enzyme GlgB (736 aa).

Asp-415 functions as the Nucleophile in the catalytic mechanism. The Proton donor role is filled by Glu-470.

This sequence belongs to the glycosyl hydrolase 13 family. GlgB subfamily. As to quaternary structure, monomer.

The catalysed reaction is Transfers a segment of a (1-&gt;4)-alpha-D-glucan chain to a primary hydroxy group in a similar glucan chain.. It participates in glycan biosynthesis; glycogen biosynthesis. In terms of biological role, catalyzes the formation of the alpha-1,6-glucosidic linkages in glycogen by scission of a 1,4-alpha-linked oligosaccharide from growing alpha-1,4-glucan chains and the subsequent attachment of the oligosaccharide to the alpha-1,6 position. This Burkholderia orbicola (strain AU 1054) protein is 1,4-alpha-glucan branching enzyme GlgB.